The following is a 655-amino-acid chain: Probable alpha-galactosidase D (655 aa).

Positions 1-16 are cleaved as a signal peptide; that stretch reads MASVIALSLLLPAAFA. Asn87 and Asn93 each carry an N-linked (GlcNAc...) asparagine glycan. Cys126 and Cys153 form a disulfide bridge. Asp151 (nucleophile) is an active-site residue. 196 to 200 provides a ligand contact to substrate; it reads EWGID. Asp218 functions as the Proton donor in the catalytic mechanism. Residues Asn432, Asn482, Asn502, Asn540, and Asn579 are each glycosylated (N-linked (GlcNAc...) asparagine).

Belongs to the glycosyl hydrolase 27 family.

Its subcellular location is the secreted. The catalysed reaction is Hydrolysis of terminal, non-reducing alpha-D-galactose residues in alpha-D-galactosides, including galactose oligosaccharides, galactomannans and galactolipids.. Its function is as follows. Hydrolyzes a variety of simple alpha-D-galactoside as well as more complex molecules such as oligosaccharides and polysaccharides. This is Probable alpha-galactosidase D (aglD) from Aspergillus terreus (strain NIH 2624 / FGSC A1156).